The chain runs to 93 residues: Pyrimidine/purine nucleoside phosphorylase (93 aa).

Belongs to the nucleoside phosphorylase PpnP family.

It catalyses the reaction a purine D-ribonucleoside + phosphate = a purine nucleobase + alpha-D-ribose 1-phosphate. It carries out the reaction adenosine + phosphate = alpha-D-ribose 1-phosphate + adenine. The enzyme catalyses cytidine + phosphate = cytosine + alpha-D-ribose 1-phosphate. The catalysed reaction is guanosine + phosphate = alpha-D-ribose 1-phosphate + guanine. It catalyses the reaction inosine + phosphate = alpha-D-ribose 1-phosphate + hypoxanthine. It carries out the reaction thymidine + phosphate = 2-deoxy-alpha-D-ribose 1-phosphate + thymine. The enzyme catalyses uridine + phosphate = alpha-D-ribose 1-phosphate + uracil. The catalysed reaction is xanthosine + phosphate = alpha-D-ribose 1-phosphate + xanthine. Its function is as follows. Catalyzes the phosphorolysis of diverse nucleosides, yielding D-ribose 1-phosphate and the respective free bases. Can use uridine, adenosine, guanosine, cytidine, thymidine, inosine and xanthosine as substrates. Also catalyzes the reverse reactions. The sequence is that of Pyrimidine/purine nucleoside phosphorylase from Vibrio atlanticus (strain LGP32) (Vibrio splendidus (strain Mel32)).